The primary structure comprises 694 residues: Long-chain-fatty-acid--CoA ligase 3 (694 aa).

Residues 1-25 form a disordered region; sequence MSEQHSVAVGKAANEHETAPRRNVR. S2 carries the post-translational modification N-acetylserine. 269–280 lines the ATP pocket; sequence YTSGSISAPKGV. An FACS motif is present at residues 527–576; it reads DGWFRTGDIVEWTPKGQLKIIDRRKNLVKTLNGEYIALEKLESVYRSNSY.

This sequence belongs to the ATP-dependent AMP-binding enzyme family. Interacts with FRK1. Mg(2+) serves as cofactor.

The protein resides in the cell membrane. It carries out the reaction a long-chain fatty acid + ATP + CoA = a long-chain fatty acyl-CoA + AMP + diphosphate. It catalyses the reaction (9Z)-octadecenoate + ATP + CoA = (9Z)-octadecenoyl-CoA + AMP + diphosphate. The enzyme catalyses hexadecanoate + ATP + CoA = hexadecanoyl-CoA + AMP + diphosphate. The catalysed reaction is (9Z)-hexadecenoate + ATP + CoA = (9Z)-hexadecenoyl-CoA + AMP + diphosphate. It carries out the reaction (9Z)-tetradecenoate + ATP + CoA = (9Z)-tetradecenoyl-CoA + AMP + diphosphate. It catalyses the reaction (9Z,12Z)-octadecadienoate + ATP + CoA = (9Z,12Z)-octadecadienoyl-CoA + AMP + diphosphate. Functionally, activates endogenous long-chain fatty acids (LCFA) by esterification of the fatty acids into metabolically active CoA-thioesters for subsequent degradation or incorporation into phospholipids. Acts preferentially on C16 and C18 fatty acids with a cis-double bond at C-9-C-10. The sequence is that of Long-chain-fatty-acid--CoA ligase 3 (FAA3) from Saccharomyces cerevisiae (strain ATCC 204508 / S288c) (Baker's yeast).